The chain runs to 83 residues: U15-theraphotoxin-Cg1a (83 aa).

Residues 1-21 (MKAAILLAFAGLALLSVICHA) form the signal peptide. Positions 22 to 49 (SENVEQDSFEEVFSAIFAMEDDLKPKER) are excised as a propeptide. Cystine bridges form between Cys-51/Cys-66, Cys-58/Cys-71, and Cys-65/Cys-77. At Ala-81 the chain carries Alanine amide.

It belongs to the neurotoxin 10 (Hwtx-1) family. 66 (Jztx-24) subfamily. In terms of tissue distribution, expressed by the venom gland.

It localises to the secreted. In terms of biological role, probable ion channel inhibitor. This is U15-theraphotoxin-Cg1a from Chilobrachys guangxiensis (Chinese earth tiger tarantula).